Reading from the N-terminus, the 572-residue chain is Methionine--tRNA ligase (572 aa).

A 'HIGH' region motif is present at residues 11–21 (PYINGIKHLGN). Zn(2+) is bound by residues C143, C146, C156, and C159. Residues 346–350 (QFSTS) carry the 'KMSKS' region motif. Residue T349 coordinates ATP.

This sequence belongs to the class-I aminoacyl-tRNA synthetase family. MetG type 1 subfamily. As to quaternary structure, monomer. Zn(2+) serves as cofactor.

The protein resides in the cytoplasm. It carries out the reaction tRNA(Met) + L-methionine + ATP = L-methionyl-tRNA(Met) + AMP + diphosphate. Its function is as follows. Is required not only for elongation of protein synthesis but also for the initiation of all mRNA translation through initiator tRNA(fMet) aminoacylation. The protein is Methionine--tRNA ligase of Cereibacter sphaeroides (strain KD131 / KCTC 12085) (Rhodobacter sphaeroides).